A 331-amino-acid polypeptide reads, in one-letter code: Cathepsin S (331 aa).

Positions 1–16 are cleaved as a signal peptide; that stretch reads MKWLVGLLPLCSYAVA. The propeptide at 17–114 is activation peptide; that stretch reads QVHKDPTLDH…VTYRSNSNQK (98 aa). The N-linked (GlcNAc...) asparagine glycan is linked to N104. 4 disulfides stabilise this stretch: C126/C224, C136/C180, C170/C213, and C272/C320. C139 is a catalytic residue. Active-site residues include H278 and N298.

The protein belongs to the peptidase C1 family.

The protein localises to the lysosome. The protein resides in the secreted. It localises to the cytoplasmic vesicle. Its subcellular location is the phagosome. It carries out the reaction Similar to cathepsin L, but with much less activity on Z-Phe-Arg-|-NHMec, and more activity on the Z-Val-Val-Arg-|-Xaa compound.. In terms of biological role, thiol protease. Key protease responsible for the removal of the invariant chain from MHC class II molecules and MHC class II antigen presentation. The bond-specificity of this proteinase is in part similar to the specificities of cathepsin L. In Canis lupus familiaris (Dog), this protein is Cathepsin S (CTSS).